The following is a 138-amino-acid chain: Ribulose bisphosphate carboxylase small subunit (138 aa).

The protein belongs to the RuBisCO small chain family. As to quaternary structure, heterohexadecamer of 8 large and 8 small subunits.

The protein resides in the plastid. Its subcellular location is the chloroplast. Its function is as follows. RuBisCO catalyzes two reactions: the carboxylation of D-ribulose 1,5-bisphosphate, the primary event in carbon dioxide fixation, as well as the oxidative fragmentation of the pentose substrate in the photorespiration process. Both reactions occur simultaneously and in competition at the same active site. Although the small subunit is not catalytic it is essential for maximal activity. This Pyropia katadae (Red alga) protein is Ribulose bisphosphate carboxylase small subunit.